Here is a 193-residue protein sequence, read N- to C-terminus: Potassium-transporting ATPase KdpC subunit (193 aa).

Residues 14 to 34 form a helical membrane-spanning segment; the sequence is ITFTFLVLCGLVYPLIVTGIA.

The protein belongs to the KdpC family. In terms of assembly, the system is composed of three essential subunits: KdpA, KdpB and KdpC.

Its subcellular location is the cell membrane. Part of the high-affinity ATP-driven potassium transport (or Kdp) system, which catalyzes the hydrolysis of ATP coupled with the electrogenic transport of potassium into the cytoplasm. This subunit acts as a catalytic chaperone that increases the ATP-binding affinity of the ATP-hydrolyzing subunit KdpB by the formation of a transient KdpB/KdpC/ATP ternary complex. The protein is Potassium-transporting ATPase KdpC subunit of Bacillus thuringiensis subsp. konkukian (strain 97-27).